A 197-amino-acid chain; its full sequence is Large ribosomal subunit protein uL10 (197 aa).

Residues 162–197 are disordered; that stretch reads GGASAPAAEEAPAAEEAAAEEVAAPAEAAEAATEEN. Over residues 163-197 the composition is skewed to low complexity; it reads GASAPAAEEAPAAEEAAAEEVAAPAEAAEAATEEN.

The protein belongs to the universal ribosomal protein uL10 family. As to quaternary structure, part of the ribosomal stalk of the 50S ribosomal subunit. The N-terminus interacts with L11 and the large rRNA to form the base of the stalk. The C-terminus forms an elongated spine to which L12 dimers bind in a sequential fashion forming a multimeric L10(L12)X complex.

Functionally, forms part of the ribosomal stalk, playing a central role in the interaction of the ribosome with GTP-bound translation factors. The sequence is that of Large ribosomal subunit protein uL10 from Paenarthrobacter aurescens (strain TC1).